A 113-amino-acid chain; its full sequence is Mediator of RNA polymerase II transcription subunit 11 (113 aa).

Belongs to the Mediator complex subunit 11 family. Component of the Mediator complex.

It localises to the nucleus. Its function is as follows. Component of the Mediator complex, a coactivator involved in the regulated transcription of nearly all RNA polymerase II-dependent genes. Mediator functions as a bridge to convey information from gene-specific regulatory proteins to the basal RNA polymerase II transcription machinery. Mediator is recruited to promoters by direct interactions with regulatory proteins and serves as a scaffold for the assembly of a functional pre-initiation complex with RNA polymerase II and the general transcription factors. This is Mediator of RNA polymerase II transcription subunit 11 (MED11) from Eremothecium gossypii (strain ATCC 10895 / CBS 109.51 / FGSC 9923 / NRRL Y-1056) (Yeast).